The primary structure comprises 98 residues: Protein Frey 1 (98 aa).

The helical transmembrane segment at 13–29 (AGLSLFLHLILAVALLR) threads the bilayer. A disordered region spans residues 60–87 (YGILPKHPRPRGPRPLLSRAQQRKRDGP).

Interacts with SPPL2C (via active sites); the interaction stabilizes FREY1 protein and inhibits SPPL2C proteolytic activity. Interacts with IZUMO1; the interaction retains IZUMO1 at the endoplasmic reticulum membrane and coordinates IZUMO1 complex assembly.

Its subcellular location is the endoplasmic reticulum membrane. Key regulator for male fertility expressed transiently in round spermatids where it recruits IZUMO1 at the endoplasmic reticulum (ER) membrane and coordinates the oolemmal binding multimeric complex (IZUMO1 complex) assembly. Upon complete assembly of the IZUMO1 complex, its ER retention is released, facilitating IZUMO1 complex export to the acrosome. Through the interaction with SPPL2C, inhibits its intramembrane protease activity directly accessing the catalytic center of an I-CLiP. The protein is Protein Frey 1 of Homo sapiens (Human).